Here is a 149-residue protein sequence, read N- to C-terminus: YGYDKYGYDKYGYDKYGYDKYGYDKYGYEKGYDKYGYDKYGYEKYGYDKYGNEKYGYDKYGDDKHGHGKDYEKYGYTKEYSKNYKDYYKKYDKYDYGSRYEKYSYRKDHDKHDHDEHDHHDDHHDHRHHHHEHDHHHHHEHDHKNGKGY.

Tandem repeats lie at residues 1 to 5 (YGYDK), 6 to 10 (YGYDK), 11 to 15 (YGYDK), 16 to 20 (YGYDK), 21 to 25 (YGYDK), and 26 to 30 (YGYEK). The segment at 1-64 (YGYDKYGYDK…YGYDKYGDDK (64 aa)) is 13 X 5 AA approximate tandem repeats of Y-G-Y-[DE]-K. One copy of the 7; truncated repeat lies at 31-34 (GYDK). 3 consecutive repeat copies span residues 35-39 (YGYDK), 40-44 (YGYEK), and 45-49 (YGYDK). An 11; approximate repeat occupies 50 to 54 (YGNEK). The stretch at 55-59 (YGYDK) is repeat 12. Residues 60 to 64 (YGDDK) form a 13; approximate repeat. The span at 105–124 (YRKDHDKHDHDEHDHHDDHH) shows a compositional bias: basic and acidic residues. The tract at residues 105-149 (YRKDHDKHDHDEHDHHDDHHDHRHHHHEHDHHHHHEHDHKNGKGY) is disordered. The span at 125-141 (DHRHHHHEHDHHHHHEH) shows a compositional bias: basic residues.

The chain is Putative eggshell protein from Schistosoma mansoni (Blood fluke).